The primary structure comprises 1091 residues: Voltage-dependent calcium channel subunit alpha-2/delta-3 (1091 aa).

Residues 1 to 28 (MAGPGSPRRASRGASALLAAALLYAALG) form the signal peptide. At 29-1068 (DVVRSEQQIP…HPEENARECG (1040 aa)) the chain is on the extracellular side. N-linked (GlcNAc...) asparagine glycosylation is present at N166. The VWFA domain maps to 256–438 (DVVILVDVSG…ENVMEYLHVL (183 aa)). D262, S264, and S266 together coordinate a divalent metal cation. The short motif at 262–266 (DVSGS) is the MIDAS-like motif element. A glycan (N-linked (GlcNAc...) asparagine) is linked at N309. An intrachain disulfide couples C412 to C1055. The Cache domain maps to 452–549 (WTEAYIDSTL…RLLYEEGKKR (98 aa)). N-linked (GlcNAc...) asparagine glycosylation is found at N553, N632, and N793. Residue Y924 is modified to Phosphotyrosine. The helical transmembrane segment at 1069-1089 (GAPSLQAQTVLLLLPLLLMLF) threads the bilayer. Residues 1090–1091 (SR) are Cytoplasmic-facing.

Belongs to the calcium channel subunit alpha-2/delta family. Dimer formed of alpha-2-2 and delta-2 chains; disulfide-linked. Voltage-dependent calcium channels are multisubunit complexes, consisting of alpha-1 (CACNA1), alpha-2 (CACNA2D), beta (CACNB) and delta (CACNA2D) subunits in a 1:1:1:1 ratio. Post-translationally, N-glycosylated. May be proteolytically processed into subunits alpha-2-3 and delta-3 that are disulfide-linked. It is however unclear whether such cleavage really takes place in vivo and has a functional role. As to expression, only detected in brain. Not present in lung, testis, aorta, spleen, jejunum, ventricular muscle and kidney (at protein level). According to PubMed:11687876, it is brain-specific, while according to PubMed:11245980, it is widely expressed.

Its subcellular location is the membrane. Functionally, the alpha-2/delta subunit of voltage-dependent calcium channels regulates calcium current density and activation/inactivation kinetics of the calcium channel. Acts as a regulatory subunit for P/Q-type calcium channel (CACNA1A), N-type (CACNA1B), L-type (CACNA1C OR CACNA1D) but not T-type (CACNA1G). This Homo sapiens (Human) protein is Voltage-dependent calcium channel subunit alpha-2/delta-3 (CACNA2D3).